The chain runs to 212 residues: Translation initiation factor IF-3 (212 aa).

Residues 168–212 (MAPKAPASPKKDKADRPEGDAGDTDMAAPAPAPAAAPETESAPSA) form a disordered region. The span at 176–186 (PKKDKADRPEG) shows a compositional bias: basic and acidic residues. The segment covering 194–212 (AAPAPAPAAAPETESAPSA) has biased composition (low complexity).

The protein belongs to the IF-3 family. In terms of assembly, monomer.

The protein localises to the cytoplasm. IF-3 binds to the 30S ribosomal subunit and shifts the equilibrium between 70S ribosomes and their 50S and 30S subunits in favor of the free subunits, thus enhancing the availability of 30S subunits on which protein synthesis initiation begins. This is Translation initiation factor IF-3 from Deinococcus radiodurans (strain ATCC 13939 / DSM 20539 / JCM 16871 / CCUG 27074 / LMG 4051 / NBRC 15346 / NCIMB 9279 / VKM B-1422 / R1).